A 203-amino-acid chain; its full sequence is Probable GTP-binding protein EngB (203 aa).

Positions 22-195 (GIPEIALAGR…WEEIVNQYNQ (174 aa)) constitute an EngB-type G domain. GTP-binding positions include 30–37 (GRSNVGKS), 57–61 (GKTRT), 75–78 (DLPG), 142–145 (TKAD), and 174–176 (VSS). Mg(2+) is bound by residues Ser-37 and Thr-59.

The protein belongs to the TRAFAC class TrmE-Era-EngA-EngB-Septin-like GTPase superfamily. EngB GTPase family. Requires Mg(2+) as cofactor.

Necessary for normal cell division and for the maintenance of normal septation. In Clostridioides difficile (strain 630) (Peptoclostridium difficile), this protein is Probable GTP-binding protein EngB.